Consider the following 759-residue polypeptide: Protein zyg-11 homolog A (759 aa).

LRR repeat units follow at residues 204-227 (LPRLESLDISNTLVTDISALLTCK), 235-260 (MHYLKCLAMTKSQILAVIRELKCLLH), and 490-513 (VTSILALQLSPEQTAQLEELFMAV).

Belongs to the zyg-11 family.

In terms of biological role, probably acts as a target recruitment subunit in an E3 ubiquitin ligase complex ZYGA-CUL2-elongin BC. The sequence is that of Protein zyg-11 homolog A (ZYG11A) from Homo sapiens (Human).